We begin with the raw amino-acid sequence, 739 residues long: Adenosylcobalamin-dependent ribonucleoside-triphosphate reductase (739 aa).

A disulfide bridge connects residues cysteine 119 and cysteine 419. The segment at 147–158 (SMPFSFLFDELM) is effector region-1. The segment at 168–313 (ARSNISQIPR…ICNLIGKAVV (146 aa)) is effector region-2. Catalysis depends on residues cysteine 408 and glutamate 410. Positions 565-626 (FHYGAYLIQR…NPNFASAGTV (62 aa)) are adenosylcobalamin-binding-1. Positions 685-724 (LQQAPKEPIDKETYEKRSQEITGNVEEVFSQLNSDVKDLE) are adenosylcobalamin-binding-2.

This sequence belongs to the class II ribonucleoside-triphosphate reductase family. Monomer. The cofactor is adenosylcob(III)alamin.

It catalyses the reaction a 2'-deoxyribonucleoside 5'-triphosphate + [thioredoxin]-disulfide + H2O = a ribonucleoside 5'-triphosphate + [thioredoxin]-dithiol. Allosterically regulated by ATP and dNTP. This Lactobacillus delbrueckii subsp. bulgaricus (strain ATCC BAA-365 / Lb-18) protein is Adenosylcobalamin-dependent ribonucleoside-triphosphate reductase (rtpR).